The primary structure comprises 566 residues: Membrane protein insertase YidC (566 aa).

The next 5 helical transmembrane spans lie at 3–23 (IKRI…FNAW), 346–366 (GWLW…HAVV), 369–389 (WGWS…WFSA), 436–456 (GGCL…YVII), and 509–529 (MWIL…GLVL).

The protein belongs to the OXA1/ALB3/YidC family. Type 1 subfamily. Interacts with the Sec translocase complex via SecD. Specifically interacts with transmembrane segments of nascent integral membrane proteins during membrane integration.

The protein localises to the cell inner membrane. In terms of biological role, required for the insertion and/or proper folding and/or complex formation of integral membrane proteins into the membrane. Involved in integration of membrane proteins that insert both dependently and independently of the Sec translocase complex, as well as at least some lipoproteins. Aids folding of multispanning membrane proteins. This Coxiella burnetii (strain Dugway 5J108-111) protein is Membrane protein insertase YidC.